The following is a 334-amino-acid chain: Ornithine carbamoyltransferase (334 aa).

Carbamoyl phosphate contacts are provided by residues 57-60 (STRT), Q84, R108, and 135-138 (HPTQ). Residues N169, D233, and 237 to 238 (SM) each bind L-ornithine. Carbamoyl phosphate-binding positions include 275 to 276 (CL) and R320.

This sequence belongs to the aspartate/ornithine carbamoyltransferase superfamily. OTCase family.

Its subcellular location is the cytoplasm. It catalyses the reaction carbamoyl phosphate + L-ornithine = L-citrulline + phosphate + H(+). It functions in the pathway amino-acid biosynthesis; L-arginine biosynthesis; L-arginine from L-ornithine and carbamoyl phosphate: step 1/3. Its function is as follows. Reversibly catalyzes the transfer of the carbamoyl group from carbamoyl phosphate (CP) to the N(epsilon) atom of ornithine (ORN) to produce L-citrulline. The chain is Ornithine carbamoyltransferase from Vibrio campbellii (strain ATCC BAA-1116).